We begin with the raw amino-acid sequence, 161 residues long: Nucleotide-binding protein SO_3815 (161 aa).

This sequence belongs to the YajQ family.

In terms of biological role, nucleotide-binding protein. This chain is Nucleotide-binding protein SO_3815, found in Shewanella oneidensis (strain ATCC 700550 / JCM 31522 / CIP 106686 / LMG 19005 / NCIMB 14063 / MR-1).